Consider the following 946-residue polypeptide: Probable inactive ATP-dependent zinc metalloprotease FTSHI 1, chloroplastic (946 aa).

A chloroplast-targeting transit peptide spans 1–54 (MASIDNVFSLGTRFSIPENPKRSILKHATTSSFSARTQTRWRAPILRRSFTVLC). 3 helical membrane passes run 289–309 (AVIAAAAVVVGGFLASAVFAV), 320–340 (VVWPIAKPFLKLFVGVFLGVL), and 369–389 (VASSLEMLKPILLVVMTMVLL). 470–477 (GPPGCGKT) provides a ligand contact to ATP.

It in the N-terminal section; belongs to the AAA ATPase family. This sequence in the C-terminal section; belongs to the peptidase M41 family. Oligomer.

It is found in the plastid. The protein resides in the chloroplast inner membrane. Its function is as follows. Functions in chloroplast biogenesis and chloroplast division. Required for plastid development during embryogenesis. Might be involved in chaperone functions or play a structural role in the thylakoid FtsH complex. The sequence is that of Probable inactive ATP-dependent zinc metalloprotease FTSHI 1, chloroplastic from Arabidopsis thaliana (Mouse-ear cress).